A 254-amino-acid chain; its full sequence is Transcription factor bHLH51 (254 aa).

The region spanning 62–111 (SLSRSHRLAEKRRRDRINSHLTALRKLVPNSDKLDKAALLATVIEQVKEL) is the bHLH domain.

In terms of assembly, homodimer. Expressed constitutively in roots, stems, and flowers.

It localises to the nucleus. The sequence is that of Transcription factor bHLH51 (BHLH51) from Arabidopsis thaliana (Mouse-ear cress).